We begin with the raw amino-acid sequence, 1411 residues long: DNA-directed RNA polymerase subunit beta' (1411 aa).

Cys-70, Cys-72, Cys-85, and Cys-88 together coordinate Zn(2+). Residues Asp-458, Asp-460, and Asp-462 each coordinate Mg(2+). Positions 813, 887, 894, and 897 each coordinate Zn(2+). The disordered stretch occupies residues 1384 to 1411; the sequence is AEAAEMATTGSDEAPEVEGSGVESGSAE.

Belongs to the RNA polymerase beta' chain family. As to quaternary structure, the RNAP catalytic core consists of 2 alpha, 1 beta, 1 beta' and 1 omega subunit. When a sigma factor is associated with the core the holoenzyme is formed, which can initiate transcription. Mg(2+) serves as cofactor. Requires Zn(2+) as cofactor.

The enzyme catalyses RNA(n) + a ribonucleoside 5'-triphosphate = RNA(n+1) + diphosphate. DNA-dependent RNA polymerase catalyzes the transcription of DNA into RNA using the four ribonucleoside triphosphates as substrates. This chain is DNA-directed RNA polymerase subunit beta', found in Paracidovorax citrulli (strain AAC00-1) (Acidovorax citrulli).